Here is a 423-residue protein sequence, read N- to C-terminus: uncharacterized protein (423 aa).

This is an uncharacterized protein from Rhizobium meliloti (strain 1021) (Ensifer meliloti).